The sequence spans 440 residues: MLLVNLAIFIAFLLLLAQLYRKTEKLGQTVFIGLLLGLLFGAVLQSAFEKPLLDKTLDWINVVSNGYVRLLQMIVMPLVFVSILSAIARINQTRSLGKVSVGVLSTLLITTAISAAIGIAMVHLFDVSAAGLIVGDRELAAQGKVLDKAGQVSNLTVPAMLVSFIPKNPFADLTGANPTSIISVVIFSALLGVAALSLGKEDQALGERIAQGVETLNKLVMRLVRFVIRLTPYGVFALMIKMAATSKWADIVNLGNFIVASYAAIALMFVVHGILLFFVKVNPVDYYKKVLPTLSFAFTSRSSAATIPLNIETQTAKLGNNNVIANFAATFGATIGQNGCGGIYPAMLAVMVAPMVGIDPFSFSYILTLIFVVAISSFGIAGVGGGATFAAIVVLSTLGLPLELIGLLISIEPIIDMGRTALNVNGAMVAGTITDRLLNK.

10 helical membrane passes run 1-21 (MLLV…QLYR), 29-49 (TVFI…SAFE), 70-90 (LLQM…IARI), 101-121 (VGVL…GIAM), 179-199 (TSII…LSLG), 226-246 (FVIR…AATS), 258-278 (IVAS…LLFF), 343-363 (IYPA…PFSF), 366-386 (ILTL…VGGG), and 389-409 (FAAI…GLLI).

The protein belongs to the dicarboxylate/amino acid:cation symporter (DAACS) (TC 2.A.23) family.

The protein localises to the cell membrane. This is an uncharacterized protein from Haemophilus influenzae (strain ATCC 51907 / DSM 11121 / KW20 / Rd).